Consider the following 22-residue polypeptide: MSIADLKSRLIKASTSKMTAEL.

This sequence belongs to the RecA family.

Its function is as follows. Important in genetic recombination, DNA repair, and replication. Possesses pairing and strand-transfer activity. Interacts with dda and gene 32 proteins. In Escherichia coli (Bacteriophage T2), this protein is Recombination and repair protein (UVSX).